The following is a 191-amino-acid chain: Thymidylate kinase (191 aa).

7-14 serves as a coordination point for ATP; the sequence is GIDGVGKS.

This sequence belongs to the thymidylate kinase family.

The enzyme catalyses dTMP + ATP = dTDP + ADP. Phosphorylation of dTMP to form dTDP in both de novo and salvage pathways of dTTP synthesis. The chain is Thymidylate kinase from Helicobacter acinonychis (strain Sheeba).